The chain runs to 82 residues: uncharacterized protein (82 aa).

2 helical membrane-spanning segments follow: residues 32–52 (PFSIALDLVSGTMVGLLIGIL) and 59–79 (SKPLFLIIFTIIGMIAGFNII).

The protein resides in the cell membrane. This is an uncharacterized protein from Rickettsia prowazekii (strain Madrid E).